Here is a 176-residue protein sequence, read N- to C-terminus: Dual specificity phosphatase 28 (176 aa).

Positions 17–159 (PPLVRVAPSL…LQKYEEALQA (143 aa)) constitute a Tyrosine-protein phosphatase domain. Cys-103 functions as the Phosphocysteine intermediate in the catalytic mechanism.

It belongs to the protein-tyrosine phosphatase family. Non-receptor class dual specificity subfamily. As to quaternary structure, monomer.

It carries out the reaction O-phospho-L-tyrosyl-[protein] + H2O = L-tyrosyl-[protein] + phosphate. The catalysed reaction is O-phospho-L-seryl-[protein] + H2O = L-seryl-[protein] + phosphate. The enzyme catalyses O-phospho-L-threonyl-[protein] + H2O = L-threonyl-[protein] + phosphate. Functionally, has phosphatase activity with the synthetic substrate 6,8-difluoro-4-methylumbelliferyl phosphate (in vitro). Has almost no detectable activity with phosphotyrosine, even less activity with phosphothreonine and displays complete lack of activity with phosphoserine. The poor activity with phosphotyrosine may be due to steric hindrance by bulky amino acid sidechains that obstruct access to the active site. This is Dual specificity phosphatase 28 (DUSP28) from Homo sapiens (Human).